The chain runs to 678 residues: UvrABC system protein B (678 aa).

The 160-residue stretch at 26 to 185 (EGLEDGEAFQ…LTTMQYTRND (160 aa)) folds into the Helicase ATP-binding domain. Residue 39 to 46 (GVTGSGKT) participates in ATP binding. The short motif at 92–115 (YYDYYQPEAYVPASDTYIAKDSSV) is the Beta-hairpin element. The region spanning 430-596 (QVDDLLGEIR…KLNKKITDIL (167 aa)) is the Helicase C-terminal domain. Residues 597–630 (EDSPYAPKPGASAAKLKAAEADGEYSPQEMQRMT) form a disordered region. Positions 635-670 (ASEIKRMEKQMYQAAKDLDFELAAKLRDDLKRLKSS) constitute a UVR domain.

It belongs to the UvrB family. As to quaternary structure, forms a heterotetramer with UvrA during the search for lesions. Interacts with UvrC in an incision complex.

The protein resides in the cytoplasm. In terms of biological role, the UvrABC repair system catalyzes the recognition and processing of DNA lesions. A damage recognition complex composed of 2 UvrA and 2 UvrB subunits scans DNA for abnormalities. Upon binding of the UvrA(2)B(2) complex to a putative damaged site, the DNA wraps around one UvrB monomer. DNA wrap is dependent on ATP binding by UvrB and probably causes local melting of the DNA helix, facilitating insertion of UvrB beta-hairpin between the DNA strands. Then UvrB probes one DNA strand for the presence of a lesion. If a lesion is found the UvrA subunits dissociate and the UvrB-DNA preincision complex is formed. This complex is subsequently bound by UvrC and the second UvrB is released. If no lesion is found, the DNA wraps around the other UvrB subunit that will check the other stand for damage. This Hydrogenovibrio crunogenus (strain DSM 25203 / XCL-2) (Thiomicrospira crunogena) protein is UvrABC system protein B.